The following is a 206-amino-acid chain: Transmembrane emp24 domain-containing protein bai (206 aa).

Positions 1–20 are cleaved as a signal peptide; sequence MLKSLLCILLIFGCLCRIHG. Residues 21–172 lie on the Lumenal side of the membrane; the sequence is VMFHLTPNTQ…RDTNEKTNSR (152 aa). A GOLD domain is found at 30 to 140; sequence QKCLKEDIQA…LKPLEVDLKR (111 aa). The helical transmembrane segment at 173 to 193 threads the bilayer; sequence VLFFSIFSMCCLLGLATWQVL. Topologically, residues 194 to 206 are cytoplasmic; the sequence is YLRRYFKAKKLIE.

The protein belongs to the EMP24/GP25L family.

Its subcellular location is the membrane. Eca and bai are essential, though not redundant, for dorsoventral patterning of the embryo. Specifically required during early embryogenesis for the activity of maternal tkv, while the zygotic tkv is not affected. In Drosophila grimshawi (Hawaiian fruit fly), this protein is Transmembrane emp24 domain-containing protein bai.